The sequence spans 279 residues: Putative biopolymer transport protein ExbB homolog (279 aa).

3 helical membrane-spanning segments follow: residues Ser-19–Leu-39, Ile-126–Phe-146, and Ile-162–Leu-182.

The protein belongs to the ExbB/TolQ family.

The protein localises to the cell membrane. This Methanothermobacter thermautotrophicus (strain ATCC 29096 / DSM 1053 / JCM 10044 / NBRC 100330 / Delta H) (Methanobacterium thermoautotrophicum) protein is Putative biopolymer transport protein ExbB homolog.